A 207-amino-acid chain; its full sequence is Large ribosomal subunit protein bL25 (207 aa).

Belongs to the bacterial ribosomal protein bL25 family. CTC subfamily. Part of the 50S ribosomal subunit; part of the 5S rRNA/L5/L18/L25 subcomplex. Contacts the 5S rRNA. Binds to the 5S rRNA independently of L5 and L18.

This is one of the proteins that binds to the 5S RNA in the ribosome where it forms part of the central protuberance. In Rhizorhabdus wittichii (strain DSM 6014 / CCUG 31198 / JCM 15750 / NBRC 105917 / EY 4224 / RW1) (Sphingomonas wittichii), this protein is Large ribosomal subunit protein bL25.